The chain runs to 240 residues: Venom hemolysin-like protein 1 (240 aa).

Residues 1-18 (MQYKLILLVVGLFQASLA) form the signal peptide. The interval 25–50 (ESVPHPSKDVAPPDTQDSSTQTEVTT) is disordered. Residues 39-50 (TQDSSTQTEVTT) show a composition bias toward polar residues.

Expressed by the venom gland (anterior main gland) (at protein level).

It localises to the secreted. This Platymeris rhadamanthus (Red spot assassin bug) protein is Venom hemolysin-like protein 1.